Here is a 71-residue protein sequence, read N- to C-terminus: Small ribosomal subunit protein bS21 (71 aa).

The segment at 37-71 is disordered; sequence HYEKPTQERKRKAAAAVKRHMKRLSREQARRRRLY. Basic residues predominate over residues 45–71; the sequence is RKRKAAAAVKRHMKRLSREQARRRRLY.

Belongs to the bacterial ribosomal protein bS21 family.

This Alkalilimnicola ehrlichii (strain ATCC BAA-1101 / DSM 17681 / MLHE-1) protein is Small ribosomal subunit protein bS21.